The primary structure comprises 371 residues: Tetraacyldisaccharide 4'-kinase (371 aa).

63-70 (AVGGAGKT) contributes to the ATP binding site.

This sequence belongs to the LpxK family.

It catalyses the reaction a lipid A disaccharide + ATP = a lipid IVA + ADP + H(+). The protein operates within glycolipid biosynthesis; lipid IV(A) biosynthesis; lipid IV(A) from (3R)-3-hydroxytetradecanoyl-[acyl-carrier-protein] and UDP-N-acetyl-alpha-D-glucosamine: step 6/6. Functionally, transfers the gamma-phosphate of ATP to the 4'-position of a tetraacyldisaccharide 1-phosphate intermediate (termed DS-1-P) to form tetraacyldisaccharide 1,4'-bis-phosphate (lipid IVA). The chain is Tetraacyldisaccharide 4'-kinase from Anaeromyxobacter sp. (strain Fw109-5).